Reading from the N-terminus, the 278-residue chain is MTVLHSVDFFPSGKAPVAIEPRLPQAAFPEHHHDFHEIVIVEHGTGIHVFNGQPYTISGGTVCFVRDHDRHLYEHTDNLCLTNVLWRSPDAFQFLAGLDQLLPQEQDGYYPSHWRVNQSVLQQVRQLVGLMEHAGDGMDAPAVANREILFMQLLVLLRRSSLMEGATNNDAKLNQLMAWLEDHFAEEVCWEAVAEQFSLSLRTLHRQLKQHTGLTPQRYLNRLRLIKARHLLRHSDHSVTEIAYRCGFGDSNHFSTLFRREFNWSPRDIRQGRDAIIQ.

Residues 174–272 (NQLMAWLEDH…NWSPRDIRQG (99 aa)) form the HTH araC/xylS-type domain. DNA-binding regions (H-T-H motif) lie at residues 191–212 (EAVAEQFSLSLRTLHRQLKQHT) and 239–262 (VTEIAYRCGFGDSNHFSTLFRREF).

As to quaternary structure, binds DNA as a dimer.

Its subcellular location is the cytoplasm. Its function is as follows. Activates expression of the rhaBAD and rhaT operons. In Salmonella paratyphi A (strain ATCC 9150 / SARB42), this protein is HTH-type transcriptional activator RhaS.